The primary structure comprises 395 residues: Elongation factor Tu (395 aa).

The region spanning 10-205 (KPHVNIGTIG…AVDSYIPMPE (196 aa)) is the tr-type G domain. The G1 stretch occupies residues 19 to 26 (GHIDHGKT). 19-26 (GHIDHGKT) is a binding site for GTP. Threonine 26 provides a ligand contact to Mg(2+). A G2 region spans residues 61-65 (GITIA). Positions 82–85 (DCPG) are G3. Residues 82–86 (DCPGH) and 137–140 (NKVD) contribute to the GTP site. The tract at residues 137 to 140 (NKVD) is G4. The tract at residues 175-177 (SAL) is G5.

It belongs to the TRAFAC class translation factor GTPase superfamily. Classic translation factor GTPase family. EF-Tu/EF-1A subfamily. As to quaternary structure, monomer.

It is found in the cytoplasm. It catalyses the reaction GTP + H2O = GDP + phosphate + H(+). Its function is as follows. GTP hydrolase that promotes the GTP-dependent binding of aminoacyl-tRNA to the A-site of ribosomes during protein biosynthesis. This Solibacter usitatus (strain Ellin6076) protein is Elongation factor Tu.